Here is a 358-residue protein sequence, read N- to C-terminus: Peptide chain release factor 1 (358 aa).

Position 233 is an N5-methylglutamine (glutamine 233).

It belongs to the prokaryotic/mitochondrial release factor family. Methylated by PrmC. Methylation increases the termination efficiency of RF1.

The protein resides in the cytoplasm. Its function is as follows. Peptide chain release factor 1 directs the termination of translation in response to the peptide chain termination codons UAG and UAA. In Listeria innocua serovar 6a (strain ATCC BAA-680 / CLIP 11262), this protein is Peptide chain release factor 1.